Consider the following 2332-residue polypeptide: Genome polyprotein (2332 aa).

The region spanning Met-1–Lys-201 is the Peptidase C28 domain. Residues Met-1–Leu-1480 lie on the Cytoplasmic side of the membrane. Residues Cys-51, His-148, and Asp-163 each act as for leader protease activity in the active site. Disordered regions lie at residues Lys-199–Asn-218 and Gln-238–Asn-265. Gly-202 carries the N-myristoyl glycine; by host lipid modification. Polar residues-rich tracts occupy residues Gly-204 to Asn-218 and Gln-238 to Gly-251. A compositionally biased stretch (low complexity) spans Ser-252–Asn-265. The segment at Ala-789–Tyr-797 is antigenic epitope. Residues Arg-868–Asp-870 carry the Cell attachment site motif. An SF3 helicase domain is found at Asn-1189 to Asp-1353. Gly-1217–Ser-1224 provides a ligand contact to ATP. An intramembrane segment occupies Lys-1481–Ile-1501. Residues Arg-1502–Ala-2332 are Cytoplasmic-facing. 2 stretches are compositionally biased toward basic and acidic residues: residues Lys-1529–Pro-1538 and Phe-1549–Val-1563. Residues Lys-1529 to Pro-1584 form a disordered region. A compositionally biased stretch (low complexity) spans Glu-1566–Glu-1578. O-(5'-phospho-RNA)-tyrosine occurs at positions 1581, 1604, and 1628. The 197-residue stretch at Ala-1652 to Leu-1848 folds into the Peptidase C3 domain. Residue His-1695 is the For protease 3C activity; Proton donor/acceptor of the active site. Residues Asp-1733 and Cys-1812 each act as for protease 3C activity in the active site. The Nuclear localization signal signature appears at Met-1878 to Thr-1886. The region spanning Arg-2096–Ala-2214 is the RdRp catalytic domain. The active-site For RdRp activity is the Asp-2200.

This sequence belongs to the picornaviruses polyprotein family. Interacts with host ISG15. Capsid protein VP1: Interacts (via R-G-D motif) with host ITGAV/ITGB6. As to quaternary structure, interacts (via R-G-D motif) with host ITGAV/ITGB6. Interacts with host MAVS; this interaction inhibits binding of host TRAF3 to MAVS, thereby suppressing interferon-mediated responses. In terms of assembly, forms homooligomers. Homohexamer. Interacts with host VIM. Interacts with host BECN1. As to quaternary structure, interacts with host DCTN3. In terms of assembly, interacts with RNA-dependent RNA polymerase; this interaction allows 3B-1 to binds 2 polymerases and act as a primer. It also allows the recruitment of the RNA-dependent RNA polymerase to host membranes. Interacts with RNA-dependent RNA polymerase; this interaction allows 3B-2 to act as a primer. As to quaternary structure, interacts with RNA-dependent RNA polymerase; this interaction allows 3B-3 to act as a primer. In terms of assembly, interacts with 3B-1; this interaction allows 3B-1 to binds 2 polymerases and act as a primer. It also allows the recruitment of the RNA-dependent RNA polymerase to host membranes. Interacts with 3B-2; this interaction allows 3B-2 to act as a primer. Interacts with 3B-3; this interaction allows 3B-3 to act as a primer. Post-translationally, removes six residues from its own C-terminus, generating sLb(pro). Specific enzymatic cleavages in vivo by the viral proteases yield a variety of precursors and mature proteins. The polyprotein seems to be cotranslationally cleaved at the 2A/2B junction by a ribosomal skip from one codon to the next without formation of a peptide bond. This process would release the L-P1-2A peptide from the translational complex. In terms of processing, during virion maturation, immature virions are rendered infectious following cleavage of VP0 into VP4 and VP2. This maturation seems to be an autocatalytic event triggered by the presence of RNA in the capsid and is followed by a conformational change of the particle. Post-translationally, myristoylation is required during RNA encapsidation and formation of the mature virus particle. Uridylylated by the polymerase and covalently linked to the 5'-end of genomic RNA. These uridylylated forms act as a nucleotide-peptide primer for the polymerase.

Its subcellular location is the host nucleus. The protein resides in the host cytoplasm. It is found in the virion. It localises to the host endoplasmic reticulum membrane. The protein localises to the host cytoplasmic vesicle membrane. It carries out the reaction Autocatalytically cleaves itself from the polyprotein of the foot-and-mouth disease virus by hydrolysis of a Lys-|-Gly bond, but then cleaves host cell initiation factor eIF-4G at bonds -Gly-|-Arg- and -Lys-|-Arg-.. The catalysed reaction is a ribonucleoside 5'-triphosphate + H2O = a ribonucleoside 5'-diphosphate + phosphate + H(+). The enzyme catalyses RNA(n) + a ribonucleoside 5'-triphosphate = RNA(n+1) + diphosphate. It catalyses the reaction Selective cleavage of Gln-|-Gly bond in the poliovirus polyprotein. In other picornavirus reactions Glu may be substituted for Gln, and Ser or Thr for Gly.. In terms of biological role, autocatalytically cleaves itself from the polyprotein at the L/VP0 junction. Also cleaves the host translation initiation factors EIF4G1 and EIF4G3, in order to shut off the capped cellular mRNA transcription. Plays a role in counteracting host innate antiviral response using diverse mechanisms. Possesses a deubiquitinase activity acting on both 'Lys-48' and 'Lys-63'-linked polyubiquitin chains. In turn, inhibits the ubiquitination and subsequent activation of key signaling molecules of type I IFN response such as host RIGI, TBK1, TRAF3 and TRAF6. Inhibits host NF-kappa-B activity by inducing a decrease in RELA mRNA levels. Cleaves a peptide bond in the C-terminus of host ISG15, resulting in the damaging of this modifier that can no longer be attached to target proteins. Also cleaves host G3BP1 and G3BP2 in order to inhibit cytoplasmic stress granules assembly. Lies on the inner surface of the capsid shell. After binding to the host receptor, the capsid undergoes conformational changes. Capsid protein VP4 is released, capsid protein VP1 N-terminus is externalized, and together, they shape a pore in the host membrane through which the viral genome is translocated into the host cell cytoplasm. After genome has been released, the channel shrinks. Its function is as follows. Forms an icosahedral capsid of pseudo T=3 symmetry with capsid proteins VP1 and VP3. The capsid is composed of 60 copies of each capsid protein organized in the form of twelve pentamers and encloses the viral positive strand RNA genome. Upon acidifcation in the endosome, dissociates into pentamers. Functionally, forms an icosahedral capsid of pseudo T=3 symmetry with capsid proteins VP0 and VP3. The capsid is composed of 60 copies of each capsid protein organized in the form of twelve pentamers and encloses the viral positive strand RNA genome. Upon acidifcation in the endosome, dissociates into pentamers. In terms of biological role, forms an icosahedral capsid of pseudo T=3 symmetry with capsid proteins VP2 and VP3. The capsid is composed of 60 copies of each capsid protein organized in the form of twelve pentamers and encloses the viral positive strand RNA genome. Mediates cell entry by attachment to an integrin receptor, usually host ITGAV/ITGB6. In addition, targets host MAVS to suppress type I IFN pathway. Upon acidifcation in the endosome, dissociates into pentamers. Mediates self-processing of the polyprotein by a translational effect termed 'ribosome skipping'. Mechanistically, 2A-mediated cleavage occurs between the C-terminal glycine and the proline of the downstream protein 2B. In the case of foot-and-mouth disease virus, the 2A oligopeptide is post-translationally 'trimmed' from the C-terminus of the upstream protein 1D by 3C proteinase. Its function is as follows. Plays an essential role in the virus replication cycle by acting as a viroporin. Creates a pore in the host endoplasmic reticulum and as a consequence releases Ca2+ in the cytoplasm of infected cell. In turn, high levels of cytoplasmic calcium may trigger membrane trafficking and transport of viral ER-associated proteins to viroplasms, sites of viral genome replication. Functionally, associates with and induces structural rearrangements of intracellular membranes. Triggers host autophagy by interacting with host BECN1 and thereby promotes viral replication. Participates in viral replication and interacts with host DHX9. Displays RNA-binding, nucleotide binding and NTPase activities. May play a role in virion morphogenesis and viral RNA encapsidation by interacting with the capsid protein VP3. In terms of biological role, plays important roles in virus replication, virulence and host range. Cooperates with host DDX56 to inhibit IRF3 nuclear translocation and subsequent type I interferon production. Covalently linked to the 5'-end of both the positive-strand and negative-strand genomic RNAs. Acts as a genome-linked replication primer. Its function is as follows. Cysteine protease that generates mature viral proteins from the precursor polyprotein. In addition to its proteolytic activity, binds to viral RNA and thus influences viral genome replication. RNA and substrate bind cooperatively to the protease. Functionally, RNA-directed RNA polymerase 3D-POL replicates genomic and antigenomic RNA by recognizing replications specific signals. Covalently attaches UMP to a tyrosine of VPg, which is used to prime RNA synthesis. The positive stranded RNA genome is first replicated at virus induced membranous vesicles, creating a dsRNA genomic replication form. This dsRNA is then used as template to synthesize positive stranded RNA genomes. ss(+)RNA genomes are either translated, replicated or encapsidated. The polypeptide is Genome polyprotein (Foot-and-mouth disease virus (isolate -/Germany/A5Westerwald/1951 serotype A) (FMDV)).